Here is a 374-residue protein sequence, read N- to C-terminus: Alanine racemase (374 aa).

Residue Lys35 is the Proton acceptor; specific for D-alanine of the active site. Position 35 is an N6-(pyridoxal phosphate)lysine (Lys35). A substrate-binding site is contributed by Arg130. The active-site Proton acceptor; specific for L-alanine is Tyr253. Met305 provides a ligand contact to substrate.

Belongs to the alanine racemase family. The cofactor is pyridoxal 5'-phosphate.

It catalyses the reaction L-alanine = D-alanine. Its pathway is amino-acid biosynthesis; D-alanine biosynthesis; D-alanine from L-alanine: step 1/1. Catalyzes the interconversion of L-alanine and D-alanine. May also act on other amino acids. The chain is Alanine racemase (alr) from Ralstonia pickettii (strain 12J).